A 95-amino-acid polypeptide reads, in one-letter code: Progonadoliberin-1 (95 aa).

An N-terminal signal peptide occupies residues 1–22 (MAPQTFALWLLLVGTLLGQGCC). At glutamine 23 the chain carries Pyrrolidone carboxylic acid. The residue at position 32 (glycine 32) is a Glycine amide.

It belongs to the GnRH family.

It localises to the secreted. In terms of biological role, stimulates the secretion of gonadotropins. This chain is Progonadoliberin-1 (gnrh1), found in Morone saxatilis (Striped bass).